Consider the following 339-residue polypeptide: N-acetyl-gamma-glutamyl-phosphate reductase 1 (339 aa).

Cys149 is a catalytic residue.

The protein belongs to the NAGSA dehydrogenase family. Type 1 subfamily.

The protein resides in the cytoplasm. It carries out the reaction N-acetyl-L-glutamate 5-semialdehyde + phosphate + NADP(+) = N-acetyl-L-glutamyl 5-phosphate + NADPH + H(+). It participates in amino-acid biosynthesis; L-arginine biosynthesis; N(2)-acetyl-L-ornithine from L-glutamate: step 3/4. Functionally, catalyzes the NADPH-dependent reduction of N-acetyl-5-glutamyl phosphate to yield N-acetyl-L-glutamate 5-semialdehyde. The protein is N-acetyl-gamma-glutamyl-phosphate reductase 1 of Lactiplantibacillus plantarum (strain ATCC BAA-793 / NCIMB 8826 / WCFS1) (Lactobacillus plantarum).